Reading from the N-terminus, the 77-residue chain is Translation initiation factor IF-1, chloroplastic (77 aa).

The S1-like domain maps to 1–72 (MKKQNLIEME…TKGRITYRLR (72 aa)).

The protein belongs to the IF-1 family. In terms of assembly, component of the 30S ribosomal translation pre-initiation complex which assembles on the 30S ribosome in the order IF-2 and IF-3, IF-1 and N-formylmethionyl-tRNA(fMet); mRNA recruitment can occur at any time during PIC assembly.

Its subcellular location is the plastid. It localises to the chloroplast. One of the essential components for the initiation of protein synthesis. Stabilizes the binding of IF-2 and IF-3 on the 30S subunit to which N-formylmethionyl-tRNA(fMet) subsequently binds. Helps modulate mRNA selection, yielding the 30S pre-initiation complex (PIC). Upon addition of the 50S ribosomal subunit IF-1, IF-2 and IF-3 are released leaving the mature 70S translation initiation complex. The protein is Translation initiation factor IF-1, chloroplastic of Zygnema circumcarinatum (Green alga).